The chain runs to 156 residues: Ribosomal RNA large subunit methyltransferase H (156 aa).

Residues Leu73, Gly104, and 123–128 (LSPLTL) contribute to the S-adenosyl-L-methionine site.

Belongs to the RNA methyltransferase RlmH family. As to quaternary structure, homodimer.

The protein localises to the cytoplasm. The enzyme catalyses pseudouridine(1915) in 23S rRNA + S-adenosyl-L-methionine = N(3)-methylpseudouridine(1915) in 23S rRNA + S-adenosyl-L-homocysteine + H(+). Functionally, specifically methylates the pseudouridine at position 1915 (m3Psi1915) in 23S rRNA. The sequence is that of Ribosomal RNA large subunit methyltransferase H from Serratia proteamaculans (strain 568).